Reading from the N-terminus, the 86-residue chain is Small ribosomal subunit protein bS20 (86 aa).

This sequence belongs to the bacterial ribosomal protein bS20 family.

Binds directly to 16S ribosomal RNA. The sequence is that of Small ribosomal subunit protein bS20 from Pelagibacter ubique (strain HTCC1062).